The chain runs to 678 residues: RxLR effector protein PITG_16705 (678 aa).

Residues 1–20 (MHLFFLTAVAFVITSVSVDA) form the signal peptide. The short motif at 46–61 (RLLRKNSTVDLVGEER) is the RxLR-dEER element.

It belongs to the RxLR effector family.

It is found in the secreted. The protein resides in the host cytoplasm. Functionally, effector that enhances P.infestans colonization of Nicotiana benthamiana leaves. The protein is RxLR effector protein PITG_16705 of Phytophthora infestans (strain T30-4) (Potato late blight agent).